Reading from the N-terminus, the 198-residue chain is Superoxide dismutase [Mn], mitochondrial (198 aa).

Residue H26 participates in Mn(2+) binding. Y34 carries the 3'-nitrotyrosine modification. An N6-acetyllysine; alternate mark is found at K44 and K51. 2 positions are modified to N6-succinyllysine; alternate: K44 and K51. Residue H74 coordinates Mn(2+). K90 carries the N6-acetyllysine modification. N6-acetyllysine; alternate occurs at positions 98 and 106. An N6-succinyllysine; alternate mark is found at K98 and K106. 2 residues coordinate Mn(2+): D159 and H163. K178 bears the N6-acetyllysine mark.

Belongs to the iron/manganese superoxide dismutase family. As to quaternary structure, homotetramer. Requires Mn(2+) as cofactor. Nitrated under oxidative stress. Nitration coupled with oxidation inhibits the catalytic activity. In terms of processing, acetylation at Lys-98 decreases enzymatic activity. Deacetylated by SIRT3 upon exposure to ionizing radiations or after long fasting. Post-translationally, polyubiquitinated; leading to proteasomal degradation. Deubiquitinated by USP36 which increases protein stability.

It is found in the mitochondrion matrix. The enzyme catalyses 2 superoxide + 2 H(+) = H2O2 + O2. In terms of biological role, destroys superoxide anion radicals which are normally produced within the cells and which are toxic to biological systems. This Hylobates lar (Lar gibbon) protein is Superoxide dismutase [Mn], mitochondrial (SOD2).